Here is a 222-residue protein sequence, read N- to C-terminus: Charged multivesicular body protein 3 (222 aa).

Residue Gly2 is the site of N-myristoyl glycine attachment. Residues 2–113 (GLFGKTQEKP…LQKSTEVMKA (112 aa)) are intramolecular interaction with C-terminus. Positions 22-54 (KIRKEMRVVDRQIRDIQREEEKVKRSVKDAAKK) form a coiled coil. Important for autoinhibitory function stretches follow at residues 59 to 64 (VCIVLA) and 168 to 169 (IL). Residues 141–222 (EEMLEDTFES…MQSRLATLRS (82 aa)) adopt a coiled-coil conformation. An intramolecular interaction with N-terminus region spans residues 151–220 (MDDQEEMEEE…EAMQSRLATL (70 aa)). Residues 151-222 (MDDQEEMEEE…MQSRLATLRS (72 aa)) form an interaction with VPS4A region. Lys179 is covalently cross-linked (Glycyl lysine isopeptide (Lys-Gly) (interchain with G-Cter in ubiquitin)). Positions 180–222 (APSKVTDALPEPEPPGAMAASEDEEEEEEALEAMQSRLATLRS) are disordered. Ser200 carries the post-translational modification Phosphoserine. Over residues 200–210 (SEDEEEEEEAL) the composition is skewed to acidic residues. Positions 201–211 (EDEEEEEEALE) match the MIT-interacting motif motif. 2 interaction with STAMBP regions span residues 203-207 (EEEEE) and 221-222 (RS).

The protein belongs to the SNF7 family. Probable core component of the endosomal sorting required for transport complex III (ESCRT-III). ESCRT-III components are thought to multimerize to form a flat lattice on the perimeter membrane of the endosome. Several assembly forms of ESCRT-III may exist that interact and act sequentially. Forms a metastable monomer in solution; its core structure (without part of the putative autoinhibitory C-terminal acidic region) oligomerizes into a flat lattice via two different dimerization interfaces. In vitro, heteromerizes with CHMP2A (but not CHMP4) to form helical tubular structures that expose membrane-interacting sites on the outside whereas VPS4B can associate on the inside of the tubule. May interact with IGFBP7; the relevance of such interaction however remains unclear. Interacts with CHMP2A. Interacts with CHMP4A; the interaction requires the release of CHMP4A autoinhibition. Interacts with VPS4A. Interacts with STAMBP; the interaction appears to relieve the autoinhibition of CHMP3. Interacts with VTA1. As to expression, widely expressed. Expressed in heart, brain, placenta, lung, liver, skeletal muscle, kidney and pancreas.

The protein localises to the cytoplasm. The protein resides in the cytosol. It is found in the membrane. It localises to the endosome. Its subcellular location is the late endosome membrane. Probable core component of the endosomal sorting required for transport complex III (ESCRT-III) which is involved in multivesicular bodies (MVBs) formation and sorting of endosomal cargo proteins into MVBs. MVBs contain intraluminal vesicles (ILVs) that are generated by invagination and scission from the limiting membrane of the endosome and mostly are delivered to lysosomes enabling degradation of membrane proteins, such as stimulated growth factor receptors, lysosomal enzymes and lipids. The MVB pathway appears to require the sequential function of ESCRT-O, -I,-II and -III complexes. ESCRT-III proteins mostly dissociate from the invaginating membrane before the ILV is released. The ESCRT machinery also functions in topologically equivalent membrane fission events, such as the terminal stages of cytokinesis and the budding of enveloped viruses (HIV-1 and other lentiviruses). ESCRT-III proteins are believed to mediate the necessary vesicle extrusion and/or membrane fission activities, possibly in conjunction with the AAA ATPase VPS4. Selectively binds to phosphatidylinositol 3,5-bisphosphate PtdIns(3,5)P2 and PtdIns(3,4)P2 in preference to other phosphoinositides tested. Involved in late stages of cytokinesis. Plays a role in endosomal sorting/trafficking of EGF receptor. Isoform 2 prevents stress-mediated cell death and accumulation of reactive oxygen species when expressed in yeast cells. This is Charged multivesicular body protein 3 (CHMP3) from Homo sapiens (Human).